Here is a 436-residue protein sequence, read N- to C-terminus: Protein TolB homolog (436 aa).

The N-terminal stretch at 1–27 is a signal peptide; that stretch reads MRHSIRLTAALLLAFIACFSFPLSAMA.

It belongs to the TolB family.

The protein localises to the periplasm. The protein is Protein TolB homolog of Chlorobium luteolum (strain DSM 273 / BCRC 81028 / 2530) (Pelodictyon luteolum).